The primary structure comprises 720 residues: Ornithine decarboxylase (720 aa).

Lys-354 is subject to N6-(pyridoxal phosphate)lysine.

The protein belongs to the Orn/Lys/Arg decarboxylase class-I family. Pyridoxal 5'-phosphate is required as a cofactor.

It carries out the reaction L-ornithine + H(+) = putrescine + CO2. This is Ornithine decarboxylase (speF) from Haemophilus influenzae (strain ATCC 51907 / DSM 11121 / KW20 / Rd).